The primary structure comprises 396 residues: MTVRLILAKGREKSLLRRHPWVFSGAVARLEGKAQPGETIDVCDSQGKWLARAAWSPSSQIRARVWSWQQDESIDIDFFVRRLNAAQQLRDWLALRDNLDSYRLIAGESDGLPGITIDRFGNFLVLQLLSAGAEYQRAALITALQRCYPDCAIYDRSDVSVRKKEGLELTQGVVLGDAPPPLLPITEHGMKLLVDIQTGHKTGYYLDQRDSRQATRRYAQGRRVLNCFSYTGGFAVSALMGNCKEVISVDTSQAALDVARQNVELNGLDVSKAHFQRDDVFKLLRRYRDEGEKFDLIIMDPPKFVENKNQLMGACRGYKDINMLAMQLLNPGGMLMTFSCSGLMATDLFQKILADAAVDAQREVQFIEQFRQAADHPVISSYPEGMYLKGFACRVI.

A PUA domain is found at 2–81 (TVRLILAKGR…ESIDIDFFVR (80 aa)).

The protein belongs to the methyltransferase superfamily. RlmI family.

It is found in the cytoplasm. It catalyses the reaction cytidine(1962) in 23S rRNA + S-adenosyl-L-methionine = 5-methylcytidine(1962) in 23S rRNA + S-adenosyl-L-homocysteine + H(+). In terms of biological role, specifically methylates the cytosine at position 1962 (m5C1962) of 23S rRNA. The chain is Ribosomal RNA large subunit methyltransferase I from Erwinia tasmaniensis (strain DSM 17950 / CFBP 7177 / CIP 109463 / NCPPB 4357 / Et1/99).